The following is a 363-amino-acid chain: Chorismate synthase (363 aa).

The tract at residues 44-63 (DLDRRKPGTSRHTTQRQEPD) is disordered. NADP(+)-binding residues include Arg-48 and Arg-54. FMN contacts are provided by residues 125-127 (RSS), 237-238 (NA), Gly-277, 292-296 (KATSS), and Arg-318.

The protein belongs to the chorismate synthase family. Homotetramer. It depends on FMNH2 as a cofactor.

It carries out the reaction 5-O-(1-carboxyvinyl)-3-phosphoshikimate = chorismate + phosphate. It participates in metabolic intermediate biosynthesis; chorismate biosynthesis; chorismate from D-erythrose 4-phosphate and phosphoenolpyruvate: step 7/7. Catalyzes the anti-1,4-elimination of the C-3 phosphate and the C-6 proR hydrogen from 5-enolpyruvylshikimate-3-phosphate (EPSP) to yield chorismate, which is the branch point compound that serves as the starting substrate for the three terminal pathways of aromatic amino acid biosynthesis. This reaction introduces a second double bond into the aromatic ring system. The chain is Chorismate synthase from Pseudomonas fluorescens (strain SBW25).